Consider the following 26-residue polypeptide: Small toxic protein ShoB (26 aa).

Residues 7-24 (LIKRVIKIIIAVLQLILL) form a helical membrane-spanning segment.

It localises to the membrane. Functionally, toxic component of a type I toxin-antitoxin (TA) system. May be a toxic protein; overexpression causes cessation of growth and rapid membrane depolarization. Overexpression induces stress-response and a number of membrane protein genes. In Escherichia coli (strain K12), this protein is Small toxic protein ShoB (shoB).